The primary structure comprises 196 residues: ATP-dependent Clp protease proteolytic subunit (196 aa).

Catalysis depends on Ser101, which acts as the Nucleophile. The active site involves His126.

This sequence belongs to the peptidase S14 family. Component of the chloroplastic Clp protease core complex.

Its subcellular location is the plastid. It localises to the chloroplast stroma. It catalyses the reaction Hydrolysis of proteins to small peptides in the presence of ATP and magnesium. alpha-casein is the usual test substrate. In the absence of ATP, only oligopeptides shorter than five residues are hydrolyzed (such as succinyl-Leu-Tyr-|-NHMec, and Leu-Tyr-Leu-|-Tyr-Trp, in which cleavage of the -Tyr-|-Leu- and -Tyr-|-Trp bonds also occurs).. Its function is as follows. Cleaves peptides in various proteins in a process that requires ATP hydrolysis. Has a chymotrypsin-like activity. Plays a major role in the degradation of misfolded proteins. This Nicotiana tabacum (Common tobacco) protein is ATP-dependent Clp protease proteolytic subunit.